Here is a 127-residue protein sequence, read N- to C-terminus: DNA-directed RNA polymerase subunit omega (127 aa).

Belongs to the RNA polymerase subunit omega family. In terms of assembly, the RNAP catalytic core consists of 2 alpha, 1 beta, 1 beta' and 1 omega subunit. When a sigma factor is associated with the core the holoenzyme is formed, which can initiate transcription.

It catalyses the reaction RNA(n) + a ribonucleoside 5'-triphosphate = RNA(n+1) + diphosphate. In terms of biological role, promotes RNA polymerase assembly. Latches the N- and C-terminal regions of the beta' subunit thereby facilitating its interaction with the beta and alpha subunits. This Rickettsia africae (strain ESF-5) protein is DNA-directed RNA polymerase subunit omega.